Here is a 305-residue protein sequence, read N- to C-terminus: Homoserine O-acetyltransferase (305 aa).

Cys142 functions as the Acyl-thioester intermediate in the catalytic mechanism. Positions 163 and 192 each coordinate substrate. The Proton acceptor role is filled by His235. The active site involves Glu237. Arg249 is a binding site for substrate.

It belongs to the MetA family.

The protein resides in the cytoplasm. The catalysed reaction is L-homoserine + acetyl-CoA = O-acetyl-L-homoserine + CoA. Its pathway is amino-acid biosynthesis; L-methionine biosynthesis via de novo pathway; O-acetyl-L-homoserine from L-homoserine: step 1/1. In terms of biological role, transfers an acetyl group from acetyl-CoA to L-homoserine, forming acetyl-L-homoserine. The protein is Homoserine O-acetyltransferase of Phocaeicola vulgatus (strain ATCC 8482 / DSM 1447 / JCM 5826 / CCUG 4940 / NBRC 14291 / NCTC 11154) (Bacteroides vulgatus).